The primary structure comprises 337 residues: MILSIESSCDDSSIAVTETSTKKILYHKKISQEAEHSCYGGVVPELASRLHAVALPKILEETKPWFDKLKAVAVTNQPGLGVTLLEGIAMAKTVAVLQNIPLIPVHHLKGHIYSLFIEKKTLFPLLVLLISGGHTQIIRVKDFEHMEILATSMDDSVGESFDKCAKMMHLGYPGGPLIEALALKGDENRFDLPVPLRNSPLIAFSLSGLKNAVRLTVEKLGGAEKMTEQDEADLSASFQKAVKLHLLQKSKKIFAKEPIRDFAIVGGASANQYLRGAYADLCREFRKTMHVAPLQYCSDNAAMIGRYAIDAYEREQFIDPNEIDIVSTKKQQAGMLL.

2 residues coordinate Fe cation: histidine 107 and histidine 111. Substrate is bound by residues 129–133, aspartate 162, glycine 175, and asparagine 271; that span reads LISGG. Aspartate 299 is a Fe cation binding site.

It belongs to the KAE1 / TsaD family. It depends on Fe(2+) as a cofactor.

The protein resides in the cytoplasm. It catalyses the reaction L-threonylcarbamoyladenylate + adenosine(37) in tRNA = N(6)-L-threonylcarbamoyladenosine(37) in tRNA + AMP + H(+). Its function is as follows. Required for the formation of a threonylcarbamoyl group on adenosine at position 37 (t(6)A37) in tRNAs that read codons beginning with adenine. Is involved in the transfer of the threonylcarbamoyl moiety of threonylcarbamoyl-AMP (TC-AMP) to the N6 group of A37, together with TsaE and TsaB. TsaD likely plays a direct catalytic role in this reaction. The protein is tRNA N6-adenosine threonylcarbamoyltransferase of Sulfurovum sp. (strain NBC37-1).